A 1012-amino-acid polypeptide reads, in one-letter code: 5'-3' exoribonuclease 2 (1012 aa).

The CCHC-type zinc finger occupies 264-281 (GKCFLCGQEGHRAADCEG). Disordered regions lie at residues 411–439 (VQQR…AQAS), 888–976 (TFKD…QRQV), and 990–1012 (QRKK…PKTA). Over residues 415 to 433 (QSERFRRDKARDKARDNAR) the composition is skewed to basic and acidic residues. Over residues 904–914 (ITPKKMNSPQR) the composition is skewed to polar residues. Basic and acidic residues-rich tracts occupy residues 918–928 (WKKDETPQSRE) and 950–962 (PQRE…KKEN). Residues 990-1002 (QRKKEKYLRKKAK) show a composition bias toward basic residues.

Belongs to the 5'-3' exonuclease family. XRN2/RAT1 subfamily. Expressed in roots, leaves, stems and flowers.

It localises to the nucleus. Functionally, possesses 5'-&gt;3' exoribonuclease activity. Acts as an endogenous post-transcriptional gene silencing (PTGS) suppressor. Degrades miRNA-derived loops, excised during miRNA maturation in the nucleus. Involved in pre-rRNA processing. Involved in the primary exonucleolytic shortening of the 5' external transcribed spacer (5'ETS), required for endonucleolytic processing at site P by the U3 snoRNP complex. Involved with XRN3 in the 5'-end processing of 5.8S and 25S rRNAs. Contributes with XRN3 to polyadenylation-dependent nuclear RNA surveillance. Involved in the degradation of aberrant polyadenylated pre-rRNA through 5'-end processing. The protein is 5'-3' exoribonuclease 2 of Arabidopsis thaliana (Mouse-ear cress).